A 152-amino-acid polypeptide reads, in one-letter code: Large ribosomal subunit protein bL9 (152 aa).

Belongs to the bacterial ribosomal protein bL9 family.

Binds to the 23S rRNA. This Nocardia farcinica (strain IFM 10152) protein is Large ribosomal subunit protein bL9.